The sequence spans 958 residues: Coiled-coil domain-containing protein 187 (958 aa).

Over residues 116-132 the composition is skewed to low complexity; the sequence is SSVSSGRMSGSSGGHES. 4 disordered regions span residues 116-160, 345-447, 470-492, and 510-602; these read SSVS…SDPR, ELTR…PRFF, QDISVQKSGSSLKKPSPFSQRPW, and EPSP…KAQA. 2 stretches are compositionally biased toward polar residues: residues 374–398 and 470–491; these read LQSTQDMQGSSKTAWTVTEGKNSSL and QDISVQKSGSSLKKPSPFSQRP. Low complexity predominate over residues 536–545; sequence SSPSSKGKSA. A coiled-coil region spans residues 718–743; it reads KQARLQALETMAEALRQRVDILTTKL. A disordered region spans residues 916–958; sequence EVKKEGLVTPWTTRSCGKGEPADRPWAGWSGGQGGLPWASSTA.

In Mus musculus (Mouse), this protein is Coiled-coil domain-containing protein 187.